The sequence spans 135 residues: Galectin-1 (135 aa).

Ala2 carries the N-acetylalanine modification. Residues 4–135 (GLVASNLNLK…DFKIKCVAFE (132 aa)) form the Galectin domain. Residues Lys13 and Lys29 each carry the N6-acetyllysine modification. Ser30 is subject to Phosphoserine. Residues 45–49 (HFNPR), His53, Asn62, and 69–72 (WGAE) each bind a beta-D-galactoside. Lys108 carries the N6-acetyllysine; alternate modification. Lys108 carries the N6-succinyllysine; alternate modification. Lys128 is subject to N6-acetyllysine.

In terms of assembly, homodimer. Binds LGALS3BP. Interacts with CD2, CD3, CD4, CD6, CD7, CD43, ALCAM and CD45. Interacts with laminin (via poly-N-acetyllactosamine). Interacts with SUSD2. Interacts with cargo receptor TMED10; the interaction mediates the translocation from the cytoplasm into the ERGIC (endoplasmic reticulum-Golgi intermediate compartment) and thereby secretion.

The protein resides in the secreted. It localises to the extracellular space. Its subcellular location is the extracellular matrix. It is found in the cytoplasm. Its function is as follows. Lectin that binds beta-galactoside and a wide array of complex carbohydrates. Plays a role in regulating apoptosis, cell proliferation and cell differentiation. Inhibits CD45 protein phosphatase activity and therefore the dephosphorylation of Lyn kinase. Strong inducer of T-cell apoptosis. This is Galectin-1 (LGALS1) from Ovis aries (Sheep).